The following is a 242-amino-acid chain: ATP-dependent dethiobiotin synthetase BioD (242 aa).

Glu-12–Val-17 lines the ATP pocket. Thr-16 provides a ligand contact to Mg(2+). Lys-37 is a catalytic residue. A substrate-binding site is contributed by Ser-41. Residues Asp-51 and Glu-112–Gly-115 each bind ATP. Asp-51 and Glu-112 together coordinate Mg(2+).

It belongs to the dethiobiotin synthetase family. In terms of assembly, homodimer. The cofactor is Mg(2+).

It localises to the cytoplasm. It carries out the reaction (7R,8S)-7,8-diammoniononanoate + CO2 + ATP = (4R,5S)-dethiobiotin + ADP + phosphate + 3 H(+). It functions in the pathway cofactor biosynthesis; biotin biosynthesis; biotin from 7,8-diaminononanoate: step 1/2. Functionally, catalyzes a mechanistically unusual reaction, the ATP-dependent insertion of CO2 between the N7 and N8 nitrogen atoms of 7,8-diaminopelargonic acid (DAPA, also called 7,8-diammoniononanoate) to form a ureido ring. In Bacillus cereus (strain ATCC 14579 / DSM 31 / CCUG 7414 / JCM 2152 / NBRC 15305 / NCIMB 9373 / NCTC 2599 / NRRL B-3711), this protein is ATP-dependent dethiobiotin synthetase BioD.